The sequence spans 304 residues: Probable 5-dehydro-4-deoxyglucarate dehydratase (304 aa).

This sequence belongs to the DapA family.

The enzyme catalyses 5-dehydro-4-deoxy-D-glucarate + H(+) = 2,5-dioxopentanoate + CO2 + H2O. The protein operates within carbohydrate acid metabolism; D-glucarate degradation; 2,5-dioxopentanoate from D-glucarate: step 2/2. This Pseudarthrobacter chlorophenolicus (strain ATCC 700700 / DSM 12829 / CIP 107037 / JCM 12360 / KCTC 9906 / NCIMB 13794 / A6) (Arthrobacter chlorophenolicus) protein is Probable 5-dehydro-4-deoxyglucarate dehydratase.